The primary structure comprises 397 residues: NADH-quinone oxidoreductase subunit D (397 aa).

This sequence belongs to the complex I 49 kDa subunit family. As to quaternary structure, NDH-1 is composed of 14 different subunits. Subunits NuoB, C, D, E, F, and G constitute the peripheral sector of the complex.

It localises to the cell inner membrane. The enzyme catalyses a quinone + NADH + 5 H(+)(in) = a quinol + NAD(+) + 4 H(+)(out). In terms of biological role, NDH-1 shuttles electrons from NADH, via FMN and iron-sulfur (Fe-S) centers, to quinones in the respiratory chain. The immediate electron acceptor for the enzyme in this species is believed to be ubiquinone. Couples the redox reaction to proton translocation (for every two electrons transferred, four hydrogen ions are translocated across the cytoplasmic membrane), and thus conserves the redox energy in a proton gradient. In Magnetococcus marinus (strain ATCC BAA-1437 / JCM 17883 / MC-1), this protein is NADH-quinone oxidoreductase subunit D.